Consider the following 332-residue polypeptide: Ketol-acid reductoisomerase (NAD(+)) (332 aa).

Residues 1–181 (MKIYYDQDAD…GATRAGVIQT (181 aa)) form the KARI N-terminal Rossmann domain. Residues 24-27 (YGSQ), Ser-50, and 82-85 (DEKQ) each bind NAD(+). His-107 is a catalytic residue. Gly-133 is a binding site for NAD(+). Residues 182–327 (TFKEETETDL…ARLRGMMPWL (146 aa)) form the KARI C-terminal knotted domain. Positions 190, 194, 226, and 230 each coordinate Mg(2+). Residue Ser-251 coordinates substrate.

It belongs to the ketol-acid reductoisomerase family. Mg(2+) serves as cofactor.

It carries out the reaction (2R)-2,3-dihydroxy-3-methylbutanoate + NAD(+) = (2S)-2-acetolactate + NADH + H(+). It participates in amino-acid biosynthesis; L-isoleucine biosynthesis; L-isoleucine from 2-oxobutanoate: step 2/4. The protein operates within amino-acid biosynthesis; L-valine biosynthesis; L-valine from pyruvate: step 2/4. Involved in the biosynthesis of branched-chain amino acids (BCAA). Catalyzes an alkyl-migration followed by a ketol-acid reduction of (S)-2-acetolactate (S2AL) to yield (R)-2,3-dihydroxy-isovalerate. In the isomerase reaction, S2AL is rearranged via a Mg-dependent methyl migration to produce 3-hydroxy-3-methyl-2-ketobutyrate (HMKB). In the reductase reaction, this 2-ketoacid undergoes a metal-dependent reduction by NADH to yield (R)-2,3-dihydroxy-isovalerate. In Thermacetogenium phaeum (strain ATCC BAA-254 / DSM 26808 / PB), this protein is Ketol-acid reductoisomerase (NAD(+)).